Here is a 466-residue protein sequence, read N- to C-terminus: Coproporphyrinogen III oxidase (466 aa).

Residues 9 to 14, 34 to 35, lysine 42, 56 to 59, valine 254, and 446 to 448 each bind FAD; these read GAGITG, EA, GPES, and VGL.

The protein belongs to the protoporphyrinogen/coproporphyrinogen oxidase family. Coproporphyrinogen III oxidase subfamily. Requires FAD as cofactor.

The protein localises to the cytoplasm. It carries out the reaction coproporphyrinogen III + 3 O2 = coproporphyrin III + 3 H2O2. Its pathway is porphyrin-containing compound metabolism; protoheme biosynthesis. The generation of protoporphyrin IX, but not coproporphyrin III, is stimulated by heme-bound HemQ. This stimulatory effect is mediated by superoxide. Inhibited by acifluorfen analogs. In terms of biological role, involved in coproporphyrin-dependent heme b biosynthesis. Catalyzes the oxidation of coproporphyrinogen III to coproporphyrin III. Can also oxidize protoporphyrinogen IX. The sequence is that of Coproporphyrinogen III oxidase from Staphylococcus aureus (strain NCTC 8325 / PS 47).